Reading from the N-terminus, the 466-residue chain is Coproporphyrinogen III oxidase (466 aa).

Residues 9–14 (GAGITG), 34–35 (EA), Lys42, 56–59 (GPES), Val254, and 446–448 (VGL) contribute to the FAD site.

Belongs to the protoporphyrinogen/coproporphyrinogen oxidase family. Coproporphyrinogen III oxidase subfamily. It depends on FAD as a cofactor.

The protein localises to the cytoplasm. It catalyses the reaction coproporphyrinogen III + 3 O2 = coproporphyrin III + 3 H2O2. The protein operates within porphyrin-containing compound metabolism; protoheme biosynthesis. The generation of protoporphyrin IX, but not coproporphyrin III, is stimulated by heme-bound HemQ. This stimulatory effect is mediated by superoxide. Inhibited by acifluorfen analogs. Its function is as follows. Involved in coproporphyrin-dependent heme b biosynthesis. Catalyzes the oxidation of coproporphyrinogen III to coproporphyrin III. Can also oxidize protoporphyrinogen IX. In Staphylococcus aureus (strain NCTC 8325 / PS 47), this protein is Coproporphyrinogen III oxidase.